Consider the following 349-residue polypeptide: tRNA pseudouridine synthase D (349 aa).

Residue F27 coordinates substrate. The active-site Nucleophile is D80. N129 contacts substrate. The 149-residue stretch at 155 to 303 (GVPNYFGAQR…VEAARRAMLL (149 aa)) folds into the TRUD domain. Position 329 (F329) interacts with substrate.

Belongs to the pseudouridine synthase TruD family.

It carries out the reaction uridine(13) in tRNA = pseudouridine(13) in tRNA. Functionally, responsible for synthesis of pseudouridine from uracil-13 in transfer RNAs. The polypeptide is tRNA pseudouridine synthase D (Escherichia coli O45:K1 (strain S88 / ExPEC)).